Consider the following 235-residue polypeptide: NAD(P)H-hydrate epimerase (235 aa).

The 204-residue stretch at 18–221 (AAQIDEQLFT…SLVDEHELLM (204 aa)) folds into the YjeF N-terminal domain. 65 to 69 (NNGGD) contributes to the (6S)-NADPHX binding site. K(+) is bound by residues Asn66 and Asp127. Residues 131-137 (GFSFHPP) and Asp160 contribute to the (6S)-NADPHX site. Ser163 contacts K(+).

The protein belongs to the NnrE/AIBP family. K(+) serves as cofactor.

It catalyses the reaction (6R)-NADHX = (6S)-NADHX. The enzyme catalyses (6R)-NADPHX = (6S)-NADPHX. In terms of biological role, catalyzes the epimerization of the S- and R-forms of NAD(P)HX, a damaged form of NAD(P)H that is a result of enzymatic or heat-dependent hydration. This is a prerequisite for the S-specific NAD(P)H-hydrate dehydratase to allow the repair of both epimers of NAD(P)HX. The polypeptide is NAD(P)H-hydrate epimerase (Caenorhabditis elegans).